A 365-amino-acid chain; its full sequence is P43 5S RNA-binding protein (365 aa).

9 C2H2-type zinc fingers span residues 15–39, 45–69, 75–100, 106–130, 136–160, 163–187, 191–213, 220–245, and 251–275; these read FRCP…MAGH, WKCG…MKRH, HSCP…LYKH, LKCS…VSEH, SVCD…HRRH, YRCS…LKKH, LQCA…KATH, LPCP…RKVH, and HRCP…LVVH.

In terms of assembly, the 42S RNP particle comprises four subunits each of which contains one molecule of 5S RNA, three molecules of tRNA, two molecules of p50 (EF1-alpha) and one molecule of the 5S RNA binding protein 43.

In terms of biological role, p43 is a 5S RNA binding protein which is a major constituent of oocytes and comprises part of a 42S ribonucleoprotein storage particle. The protein is P43 5S RNA-binding protein of Xenopus borealis (Kenyan clawed frog).